Consider the following 524-residue polypeptide: Excitatory amino acid transporter 3 (524 aa).

Residues 1-18 (MGKPARKGCEWKRFLKNN) lie on the Cytoplasmic side of the membrane. Residues 19–38 (WVLLSTVAAVVLGITTGVLV) form a helical membrane-spanning segment. Residues 39-61 (REHSNLSTLEKFYFAFPGEILMR) are Extracellular-facing. An N-linked (GlcNAc...) asparagine glycan is attached at Asn-43. Residues 62 to 82 (MLKLIILPLIISSMITGVAAL) traverse the membrane as a helical segment. The Cytoplasmic segment spans residues 83–93 (DSNVSGKIGLR). Residues 94–114 (AVVYYFCTTLIAVILGIVLVV) form a helical membrane-spanning segment. Positions 98, 101, and 102 each coordinate Na(+). Over 115–205 (SIKPGVTQKV…KTKEYKIVGM (91 aa)) the chain is Extracellular. Residues Asn-178 and Asn-195 are each glycosylated (N-linked (GlcNAc...) asparagine). The chain crosses the membrane as a helical span at residues 206–229 (YSDGINVLGLIVFCLVFGLVIGKM). At 230–238 (GEKGQILVD) the chain is on the cytoplasmic side. Residues 239–266 (FFNALSDATMKIVQIIMCYMPLGILFLI) form a helical membrane-spanning segment. Residues 267-286 (AGKIIEVEDWEIFRKLGLYM) lie on the Extracellular side of the membrane. A helical membrane pass occupies residues 287-308 (ATVLTGLAIHSIVILPLIYFIV). Residues 309 to 313 (VRKNP) lie on the Cytoplasmic side of the membrane. Residues 314 to 344 (FRFAMGMAQALLTALMISSSSATLPVTFRCA) constitute an intramembrane region (discontinuously helical). The L-aspartate site is built by Ser-331 and Ser-333. The Cytoplasmic segment spans residues 345–353 (EENNQVDKR). A helical transmembrane segment spans residues 354-380 (ITRFVLPVGATINMDGTALYEAVAAVF). Residues Gly-362, Thr-364, Asn-366, and Asp-368 each coordinate Na(+). Thr-370 lines the L-aspartate pocket. Residues 381–393 (IAQLNDLDLGIGQ) are Extracellular-facing. The segment at residues 394 to 427 (IITISITATSASIGAAGVPQAGLVTMVIVLSAVG) is an intramembrane region (discontinuously helical). Residues Ser-405, Ile-406, and Ala-408 each coordinate Na(+). Residue Val-411 coordinates L-aspartate. Topologically, residues 428–440 (LPAEDVTLIIAVD) are extracellular. Residues 441–462 (WLLDRFRTMVNVLGDAFGTGIV) form a helical membrane-spanning segment. L-aspartate is bound by residues Arg-447, Thr-448, and Asn-451. Na(+) contacts are provided by Asn-451 and Asp-455. The Cytoplasmic portion of the chain corresponds to 463-524 (EKLSKKELEQ…TISFTQTSQF (62 aa)). Ser-517 and Ser-522 each carry phosphoserine.

Belongs to the dicarboxylate/amino acid:cation symporter (DAACS) (TC 2.A.23) family. SLC1A1 subfamily. As to quaternary structure, homotrimer. Interacts with ARL6IP5. Interacts with RTN2 (via N-terminus); the interaction promotes cell surface expression of SLC1A1. Interacts with SORCS2; this interaction is important for normal expression at the cell membrane. Post-translationally, glycosylated. In terms of tissue distribution, expressed in all tissues tested including liver, muscle, testis, ovary, retinoblastoma cell line, neurons and brain (in which there was dense expression in substantia nigra, red nucleus, hippocampus and in cerebral cortical layers).

It localises to the cell membrane. It is found in the apical cell membrane. The protein resides in the synapse. Its subcellular location is the synaptosome. The protein localises to the early endosome membrane. It localises to the late endosome membrane. It is found in the recycling endosome membrane. It carries out the reaction K(+)(in) + L-glutamate(out) + 3 Na(+)(out) + H(+)(out) = K(+)(out) + L-glutamate(in) + 3 Na(+)(in) + H(+)(in). It catalyses the reaction K(+)(in) + L-aspartate(out) + 3 Na(+)(out) + H(+)(out) = K(+)(out) + L-aspartate(in) + 3 Na(+)(in) + H(+)(in). The enzyme catalyses D-aspartate(out) + K(+)(in) + 3 Na(+)(out) + H(+)(out) = D-aspartate(in) + K(+)(out) + 3 Na(+)(in) + H(+)(in). The catalysed reaction is K(+)(in) + L-cysteine(out) + 3 Na(+)(out) + H(+)(out) = K(+)(out) + L-cysteine(in) + 3 Na(+)(in) + H(+)(in). Sodium-dependent, high-affinity amino acid transporter that mediates the uptake of L-glutamate and also L-aspartate and D-aspartate. Can also transport L-cysteine. Functions as a symporter that transports one amino acid molecule together with two or three Na(+) ions and one proton, in parallel with the counter-transport of one K(+) ion. Mediates Cl(-) flux that is not coupled to amino acid transport; this avoids the accumulation of negative charges due to aspartate and Na(+) symport. Plays an important role in L-glutamate and L-aspartate reabsorption in renal tubuli. Plays a redundant role in the rapid removal of released glutamate from the synaptic cleft, which is essential for terminating the postsynaptic action of glutamate. Contributes to glutathione biosynthesis and protection against oxidative stress via its role in L-glutamate and L-cysteine transport. Negatively regulated by ARL6IP5. The polypeptide is Excitatory amino acid transporter 3 (Homo sapiens (Human)).